A 240-amino-acid chain; its full sequence is Ribonuclease HII (240 aa).

An RNase H type-2 domain is found at 27 to 226; sequence GPVAGVDEAG…REARSLRLED (200 aa). A divalent metal cation-binding residues include aspartate 33, glutamate 34, and aspartate 127.

It belongs to the RNase HII family. The cofactor is Mn(2+). Requires Mg(2+) as cofactor.

The protein localises to the cytoplasm. It catalyses the reaction Endonucleolytic cleavage to 5'-phosphomonoester.. Endonuclease that specifically degrades the RNA of RNA-DNA hybrids. The sequence is that of Ribonuclease HII from Frankia casuarinae (strain DSM 45818 / CECT 9043 / HFP020203 / CcI3).